Consider the following 127-residue polypeptide: Large-conductance mechanosensitive channel (127 aa).

The next 3 helical transmembrane spans lie at F8–G28, I30–I50, and I70–F90.

It belongs to the MscL family. Homopentamer.

It localises to the cell membrane. Channel that opens in response to stretch forces in the membrane lipid bilayer. May participate in the regulation of osmotic pressure changes within the cell. In Herpetosiphon aurantiacus (strain ATCC 23779 / DSM 785 / 114-95), this protein is Large-conductance mechanosensitive channel.